Consider the following 250-residue polypeptide: Cell division protein ZapD (250 aa).

Belongs to the ZapD family. Interacts with FtsZ.

The protein localises to the cytoplasm. Its function is as follows. Cell division factor that enhances FtsZ-ring assembly. Directly interacts with FtsZ and promotes bundling of FtsZ protofilaments, with a reduction in FtsZ GTPase activity. The chain is Cell division protein ZapD from Bordetella petrii (strain ATCC BAA-461 / DSM 12804 / CCUG 43448).